Reading from the N-terminus, the 404-residue chain is UPF0261 protein CTC_01794 (404 aa).

This sequence belongs to the UPF0261 family.

The sequence is that of UPF0261 protein CTC_01794 from Clostridium tetani (strain Massachusetts / E88).